Here is a 415-residue protein sequence, read N- to C-terminus: Putative serpin-Z6C (415 aa).

Residues 357 to 381 (GTEAAAATAVCLTFASAAPSSRRPA) form an RCL region.

It belongs to the serpin family.

Its function is as follows. Probable serine protease inhibitor. The polypeptide is Putative serpin-Z6C (Oryza sativa subsp. japonica (Rice)).